A 286-amino-acid polypeptide reads, in one-letter code: Bifunctional protein FolD (286 aa).

NADP(+)-binding positions include 165–167 and serine 190; that span reads GRS.

This sequence belongs to the tetrahydrofolate dehydrogenase/cyclohydrolase family. As to quaternary structure, homodimer.

It catalyses the reaction (6R)-5,10-methylene-5,6,7,8-tetrahydrofolate + NADP(+) = (6R)-5,10-methenyltetrahydrofolate + NADPH. The catalysed reaction is (6R)-5,10-methenyltetrahydrofolate + H2O = (6R)-10-formyltetrahydrofolate + H(+). Its pathway is one-carbon metabolism; tetrahydrofolate interconversion. Functionally, catalyzes the oxidation of 5,10-methylenetetrahydrofolate to 5,10-methenyltetrahydrofolate and then the hydrolysis of 5,10-methenyltetrahydrofolate to 10-formyltetrahydrofolate. The sequence is that of Bifunctional protein FolD from Paraburkholderia xenovorans (strain LB400).